We begin with the raw amino-acid sequence, 848 residues long: Aryl hydrocarbon receptor (848 aa).

Positions 1–9 (MSSGANITY) are excised as a propeptide. The interval 1–38 (MSSGANITYASRKRRKPVQKTVKPIPAEGIKSNPSKRH) is disordered. 2 consecutive short sequence motifs (nuclear localization signal) follow at residues 12–15 (RKRR) and 36–41 (KRHRDR). In terms of domain architecture, bHLH spans 26-79 (PAEGIKSNPSKRHRDRLNTELDRLASLLPFPQDVINKLDKLSVLRLSVSYLRAK). Residues 37-65 (RHRDRLNTELDRLASLLPFPQDVINKLDK) form a DNA-binding region. Required for maintaining the overall integrity of the AHR:ARNT heterodimer and its transcriptional activity regions lie at residues 49–81 (LASL…AKSF), 116–124 (LLQALNGFV), and 260–262 (FAI). The short motif at 63 to 71 (LDKLSVLRL) is the Nuclear export signal element. One can recognise a PAS 1 domain in the interval 116–179 (LLQALNGFVL…RQLHWALNPD (64 aa)). One can recognise a PAS 2 domain in the interval 269-336 (PSILEIRTKN…CAESHIRMIK (68 aa)). Residues 342-380 (MTVFRLFAKHSRWRWVQSNARLIYRNGRPDYIIATQRPL) enclose the PAC domain. A disordered region spans residues 421–449 (LPIRTKSNTSRKDWAPQSTPSKDSFHPSS). Residues 436–449 (PQSTPSKDSFHPSS) are compositionally biased toward polar residues.

In terms of assembly, homodimer. Heterodimer; efficient DNA binding requires dimerization with another bHLH protein. Interacts with ARNT; the heterodimer ARNT:AHR binds to core DNA sequence 5'-TGCGTG-3' within the dioxin response element (DRE) of target gene promoters and activates their transcription. Binds MYBBP1A. Interacts with coactivators including SRC-1, RIP140 and NOCA7, and with the corepressor SMRT. Interacts with NEDD8 and IVNS1ABP. Interacts with BMAL1. Interacts with HSP90AB1. Interacts with TIPARP; leading to mono-ADP-ribosylation of AHR and subsequent inhibition of AHR. Post-translationally, mono-ADP-ribosylated, leading to inhibit transcription activator activity of AHR. As to expression, expressed in all tissues tested including brain, heart, kidney, liver, lung, muscle, ovary, skin, spleen and thymus.

Its subcellular location is the cytoplasm. The protein resides in the nucleus. Ligand-activated transcription factor that enables cells to adapt to changing conditions by sensing compounds from the environment, diet, microbiome and cellular metabolism, and which plays important roles in development, immunity and cancer. Upon ligand binding, translocates into the nucleus, where it heterodimerizes with ARNT and induces transcription by binding to xenobiotic response elements (XRE). Regulates a variety of biological processes, including angiogenesis, hematopoiesis, drug and lipid metabolism, cell motility and immune modulation. Xenobiotics can act as ligands: upon xenobiotic-binding, activates the expression of multiple phase I and II xenobiotic chemical metabolizing enzyme genes (such as the CYP1A1 gene). Mediates biochemical and toxic effects of halogenated aromatic hydrocarbons. Next to xenobiotics, natural ligands derived from plants, microbiota, and endogenous metabolism are potent AHR agonists. Tryptophan (Trp) derivatives constitute an important class of endogenous AHR ligands. Acts as a negative regulator of anti-tumor immunity: indoles and kynurenic acid generated by Trp catabolism act as ligand and activate AHR, thereby promoting AHR-driven cancer cell motility and suppressing adaptive immunity. Regulates the circadian clock by inhibiting the basal and circadian expression of the core circadian component PER1. Inhibits PER1 by repressing the CLOCK-BMAL1 heterodimer mediated transcriptional activation of PER1. The heterodimer ARNT:AHR binds to core DNA sequence 5'-TGCGTG-3' within the dioxin response element (DRE) of target gene promoters and activates their transcription. The sequence is that of Aryl hydrocarbon receptor (Ahr) from Mus musculus (Mouse).